Consider the following 510-residue polypeptide: MIWHVQNENFILDSTRIFMKAFHLLLFDGSLIFPECILIFGLILLLMIDSTSDQKDIPWLYFISSTSLVMSITALLFRWREEPMISFSGNFQTNNFNEIFQFLILLCSTLCIPLSVEYIECTEMALTEFLLFILTATLGGMFLCGANDLITIFVAPECFSLCSYLLSGYTKKDVRSNEATTKYLLMGGASSSILVHGFSWLYGSSGGEIELQEIVNGLINTQMYNSPGISIALIFITVGIGFKLSPAPSHQWTPDVYEGSPTPVVAFLSVTSKVAASASATRIFDIPFYFSSNEWHLLLEILAILSMILGNLIAITQTSMKRMLAYSSIGQIGYVIIGIIVGDSNDGYASMITYMLFYISMNLGTFACIVLFGLRTGTDNIRDYAGLYTKDPFLALSLALCLLSLGGLPPLAGFFGKIYLFWCGWQAGLYFLVLIGLLTSVLSIYYYLKIIKLLMTGRNQEITPHVRNYRRSPLRSKNSIEFSMIVCVIASTIPGISMNPIITIAQDTLF.

Transmembrane regions (helical) follow at residues 24–44 (LLLFDGSLIFPECILIFGLIL), 57–77 (IPWLYFISSTSLVMSITALLF), 99–119 (IFQFLILLCSTLCIPLSVEYI), 124–144 (MALTEFLLFILTATLGGMFLC), 149–169 (LITIFVAPECFSLCSYLLSGY), 183–203 (YLLMGGASSSILVHGFSWLYG), 227–247 (PGISIALIFITVGIGFKLSPA), 295–315 (WHLLLEILAILSMILGNLIAI), 323–343 (MLAYSSIGQIGYVIIGIIVGD), 354–374 (YMLFYISMNLGTFACIVLFGL), 395–415 (ALSLALCLLSLGGLPPLAGFF), 418–438 (IYLFWCGWQAGLYFLVLIGLL), and 484–504 (MIVCVIASTIPGISMNPIITI).

Belongs to the complex I subunit 2 family. As to quaternary structure, NDH is composed of at least 16 different subunits, 5 of which are encoded in the nucleus.

Its subcellular location is the plastid. It localises to the chloroplast thylakoid membrane. It catalyses the reaction a plastoquinone + NADH + (n+1) H(+)(in) = a plastoquinol + NAD(+) + n H(+)(out). The enzyme catalyses a plastoquinone + NADPH + (n+1) H(+)(in) = a plastoquinol + NADP(+) + n H(+)(out). Its function is as follows. NDH shuttles electrons from NAD(P)H:plastoquinone, via FMN and iron-sulfur (Fe-S) centers, to quinones in the photosynthetic chain and possibly in a chloroplast respiratory chain. The immediate electron acceptor for the enzyme in this species is believed to be plastoquinone. Couples the redox reaction to proton translocation, and thus conserves the redox energy in a proton gradient. The chain is NAD(P)H-quinone oxidoreductase subunit 2 A, chloroplastic from Spinacia oleracea (Spinach).